A 256-amino-acid chain; its full sequence is Type III pantothenate kinase (256 aa).

ATP is bound at residue 6 to 13; that stretch reads DVGNSNIV. Substrate contacts are provided by residues Tyr-100 and 107 to 110; that span reads GADR. Catalysis depends on Asp-109, which acts as the Proton acceptor. K(+) is bound at residue Asp-129. Thr-132 contributes to the ATP binding site. Thr-184 lines the substrate pocket.

Belongs to the type III pantothenate kinase family. In terms of assembly, homodimer. The cofactor is NH4(+). Requires K(+) as cofactor.

It is found in the cytoplasm. The enzyme catalyses (R)-pantothenate + ATP = (R)-4'-phosphopantothenate + ADP + H(+). Its pathway is cofactor biosynthesis; coenzyme A biosynthesis; CoA from (R)-pantothenate: step 1/5. Functionally, catalyzes the phosphorylation of pantothenate (Pan), the first step in CoA biosynthesis. This is Type III pantothenate kinase from Geotalea uraniireducens (strain Rf4) (Geobacter uraniireducens).